A 173-amino-acid chain; its full sequence is Mesencephalic astrocyte-derived neurotrophic factor homolog (173 aa).

A signal peptide spans 1-22 (MNTSHIVLMICFIVGVGQTALA). 4 cysteine pairs are disulfide-bonded: Cys28–Cys114, Cys31–Cys103, Cys61–Cys72, and Cys148–Cys151.

The protein belongs to the ARMET family.

It is found in the secreted. Its function is as follows. Required during the maturation of the embryonic nervous system for maintenance of neuronal and cuticular connectivity. Essential for maintenance of dopaminergic neurons and dopamine levels. The polypeptide is Mesencephalic astrocyte-derived neurotrophic factor homolog (Drosophila virilis (Fruit fly)).